The following is a 471-amino-acid chain: tRNA-2-methylthio-N(6)-dimethylallyladenosine synthase (471 aa).

Positions 31–149 (LYYHIETYGC…FPQLLWEALN (119 aa)) constitute an MTTase N-terminal domain. Positions 40, 76, 110, 186, 190, and 193 each coordinate [4Fe-4S] cluster. Residues 172–402 (RDSNLKAWVN…IELQNKISLE (231 aa)) form the Radical SAM core domain. The TRAM domain maps to 405 to 468 (AELRGKIVEV…AWTMQGELVE (64 aa)).

Belongs to the methylthiotransferase family. MiaB subfamily. In terms of assembly, monomer. Requires [4Fe-4S] cluster as cofactor.

Its subcellular location is the cytoplasm. The catalysed reaction is N(6)-dimethylallyladenosine(37) in tRNA + (sulfur carrier)-SH + AH2 + 2 S-adenosyl-L-methionine = 2-methylsulfanyl-N(6)-dimethylallyladenosine(37) in tRNA + (sulfur carrier)-H + 5'-deoxyadenosine + L-methionine + A + S-adenosyl-L-homocysteine + 2 H(+). Its function is as follows. Catalyzes the methylthiolation of N6-(dimethylallyl)adenosine (i(6)A), leading to the formation of 2-methylthio-N6-(dimethylallyl)adenosine (ms(2)i(6)A) at position 37 in tRNAs that read codons beginning with uridine. The protein is tRNA-2-methylthio-N(6)-dimethylallyladenosine synthase of Thermoanaerobacter sp. (strain X514).